The chain runs to 303 residues: Glycine--tRNA ligase alpha subunit (303 aa).

It belongs to the class-II aminoacyl-tRNA synthetase family. In terms of assembly, tetramer of two alpha and two beta subunits.

It is found in the cytoplasm. It carries out the reaction tRNA(Gly) + glycine + ATP = glycyl-tRNA(Gly) + AMP + diphosphate. The polypeptide is Glycine--tRNA ligase alpha subunit (Erwinia tasmaniensis (strain DSM 17950 / CFBP 7177 / CIP 109463 / NCPPB 4357 / Et1/99)).